The chain runs to 475 residues: Ribulose bisphosphate carboxylase large chain (475 aa).

The propeptide occupies 1–2; sequence MA. Proline 3 is modified (N-acetylproline). Lysine 14 is subject to N6,N6,N6-trimethyllysine. 2 residues coordinate substrate: asparagine 123 and threonine 173. Residue lysine 175 is the Proton acceptor of the active site. Substrate is bound at residue lysine 177. Mg(2+) is bound by residues lysine 201, aspartate 203, and glutamate 204. N6-carboxylysine is present on lysine 201. The active-site Proton acceptor is histidine 294. Residues arginine 295, histidine 327, and serine 379 each coordinate substrate.

This sequence belongs to the RuBisCO large chain family. Type I subfamily. Heterohexadecamer of 8 large chains and 8 small chains; disulfide-linked. The disulfide link is formed within the large subunit homodimers. It depends on Mg(2+) as a cofactor. The disulfide bond which can form in the large chain dimeric partners within the hexadecamer appears to be associated with oxidative stress and protein turnover.

It is found in the plastid. Its subcellular location is the chloroplast. It carries out the reaction 2 (2R)-3-phosphoglycerate + 2 H(+) = D-ribulose 1,5-bisphosphate + CO2 + H2O. The catalysed reaction is D-ribulose 1,5-bisphosphate + O2 = 2-phosphoglycolate + (2R)-3-phosphoglycerate + 2 H(+). RuBisCO catalyzes two reactions: the carboxylation of D-ribulose 1,5-bisphosphate, the primary event in carbon dioxide fixation, as well as the oxidative fragmentation of the pentose substrate in the photorespiration process. Both reactions occur simultaneously and in competition at the same active site. This chain is Ribulose bisphosphate carboxylase large chain, found in Oedogonium cardiacum (Filamentous green alga).